The chain runs to 103 residues: Small ribosomal subunit protein bS18c (103 aa).

The protein belongs to the bacterial ribosomal protein bS18 family. In terms of assembly, part of the 30S ribosomal subunit.

It is found in the plastid. It localises to the chloroplast. In Buxus microphylla (Littleleaf boxwood), this protein is Small ribosomal subunit protein bS18c.